The sequence spans 176 residues: Ferredoxin-type protein NapF (176 aa).

2 4Fe-4S ferredoxin-type domains span residues 39 to 68 (VENS…KGDA) and 71 to 100 (PEVR…PRDQ). C48, C51, C54, C58, C80, C83, C86, C90, C113, C121, C124, C128, C152, C155, C158, and C162 together coordinate [4Fe-4S] cluster. 4Fe-4S ferredoxin-type domains lie at 119 to 138 (IECR…FKLQ) and 143 to 172 (AQPL…MNDL).

It belongs to the NapF family. In terms of assembly, interacts with the cytoplasmic NapA precursor. [4Fe-4S] cluster is required as a cofactor.

It is found in the cytoplasm. Functionally, could be involved in the maturation of NapA, the catalytic subunit of the periplasmic nitrate reductase, before its export into the periplasm. The protein is Ferredoxin-type protein NapF of Haemophilus influenzae (strain ATCC 51907 / DSM 11121 / KW20 / Rd).